The following is a 492-amino-acid chain: Cytochrome P450 26A1 (492 aa).

Cys438 is a heme binding site.

Belongs to the cytochrome P450 family. Heme serves as cofactor.

Its subcellular location is the endoplasmic reticulum membrane. The protein localises to the microsome membrane. The catalysed reaction is all-trans-retinoate + reduced [NADPH--hemoprotein reductase] + O2 = all-trans-(4S)-hydroxyretinoate + oxidized [NADPH--hemoprotein reductase] + H2O + H(+). Its function is as follows. A cytochrome P450 monooxygenase involved in the metabolism of all-trans retinoic acid (atRA), a signaling molecule that binds to retinoic acid receptors and regulates gene transcription. Mechanistically, uses molecular oxygen inserting one oxygen atom into a substrate, and reducing the second into a water molecule, with two electrons provided by NADPH via cytochrome P450 reductase (CPR; NADPH-ferrihemoprotein reductase). Catalyzes the hydroxylation of carbon hydrogen bonds of atRA primarily at C-4. Has no activity toward 9-cis and 13-cis retinoic acid stereoisomers. May play a role in the oxidative metabolism of xenobiotics such as tazarotenic acid. This is Cytochrome P450 26A1 (cyp26a1) from Danio rerio (Zebrafish).